A 154-amino-acid polypeptide reads, in one-letter code: MGRFIFVSFGLLVVFLSLSGTGADFFCPSGWGSNNGHCYQAFNQRMTWEDAERFCSAQAKGGHLVSIETRAEADFVAHVVAERIETSFPHVWIGLRDEGKEQQCSSEWSDGSSVSYENWIEAESKTCLGLELDSNYHKWVNVYCGQRNPFVCEA.

The N-terminal stretch at 1 to 23 (MGRFIFVSFGLLVVFLSLSGTGA) is a signal peptide. Disulfide bonds link C27-C38, C55-C152, and C127-C144. The C-type lectin domain maps to 34 to 153 (NNGHCYQAFN…CGQRNPFVCE (120 aa)). 3 residues coordinate Ca(2+): S66, E68, and E72. Position 153 (E153) interacts with Ca(2+).

Belongs to the snaclec family. In terms of assembly, heterodimer of subunits A and B; disulfide-linked. Expressed by the venom gland.

Its subcellular location is the secreted. Its function is as follows. Inhibits thrombin-induced fibrinogen clotting and factor Xa-induced prothrombin activation. Binds to thrombin and prothrombin exosites. This Gloydius brevicauda (Korean slamosa snake) protein is Snaclec salmorin subunit A.